An 86-amino-acid polypeptide reads, in one-letter code: Large ribosomal subunit protein bL31B (86 aa).

It belongs to the bacterial ribosomal protein bL31 family. Type B subfamily. Part of the 50S ribosomal subunit.

The protein is Large ribosomal subunit protein bL31B of Burkholderia cenocepacia (strain ATCC BAA-245 / DSM 16553 / LMG 16656 / NCTC 13227 / J2315 / CF5610) (Burkholderia cepacia (strain J2315)).